A 434-amino-acid chain; its full sequence is Mitochondrial distribution and morphology protein 12 (434 aa).

The SMP-LTD domain maps to 1 to 434 (MSIDIDWERA…VYPSFWTFLV (434 aa)). Residues 70–83 (YEEDDNENFSESSE) show a composition bias toward acidic residues. 2 disordered regions span residues 70–141 (YEED…LRSP) and 181–275 (TPLG…DDLP). Residues 86-97 (SPTREPVDRYGS) show a composition bias toward basic and acidic residues. A compositionally biased stretch (polar residues) spans 215-237 (SAQSRPSTANTGNTLLSRGSMSS).

This sequence belongs to the MDM12 family. As to quaternary structure, component of the ER-mitochondria encounter structure (ERMES) or MDM complex, composed of MMM1, MDM10, MDM12 and MDM34. An MMM1 homodimer associates with one molecule of MDM12 on each side in a pairwise head-to-tail manner, and the SMP-LTD domains of MMM1 and MDM12 generate a continuous hydrophobic tunnel for phospholipid trafficking.

Its subcellular location is the mitochondrion outer membrane. It is found in the endoplasmic reticulum membrane. Component of the ERMES/MDM complex, which serves as a molecular tether to connect the endoplasmic reticulum (ER) and mitochondria. Components of this complex are involved in the control of mitochondrial shape and protein biogenesis, and function in nonvesicular lipid trafficking between the ER and mitochondria. MDM12 is required for the interaction of the ER-resident membrane protein MMM1 and the outer mitochondrial membrane-resident beta-barrel protein MDM10. The MDM12-MMM1 subcomplex functions in the major beta-barrel assembly pathway that is responsible for biogenesis of all mitochondrial outer membrane beta-barrel proteins, and acts in a late step after the SAM complex. The MDM10-MDM12-MMM1 subcomplex further acts in the TOM40-specific pathway after the action of the MDM12-MMM1 complex. Essential for establishing and maintaining the structure of mitochondria and maintenance of mtDNA nucleoids. The chain is Mitochondrial distribution and morphology protein 12 from Blastomyces gilchristii (strain SLH14081) (Blastomyces dermatitidis).